We begin with the raw amino-acid sequence, 182 residues long: Small ribosomal subunit protein uS9 (182 aa).

This sequence belongs to the universal ribosomal protein uS9 family.

The polypeptide is Small ribosomal subunit protein uS9 (Corynebacterium efficiens (strain DSM 44549 / YS-314 / AJ 12310 / JCM 11189 / NBRC 100395)).